A 307-amino-acid polypeptide reads, in one-letter code: Agmatinase (307 aa).

His-128, Asp-151, His-153, Asp-155, Asp-232, and Asp-234 together coordinate Mn(2+).

It belongs to the arginase family. Agmatinase subfamily. Mn(2+) serves as cofactor.

The catalysed reaction is agmatine + H2O = urea + putrescine. It participates in amine and polyamine biosynthesis; putrescine biosynthesis via agmatine pathway; putrescine from agmatine: step 1/1. Its function is as follows. Catalyzes the formation of putrescine from agmatine. The chain is Agmatinase from Neisseria gonorrhoeae (strain ATCC 700825 / FA 1090).